Reading from the N-terminus, the 299-residue chain is Protease HtpX homolog (299 aa).

Transmembrane regions (helical) follow at residues 15 to 35 (ILLLVFFLLLALVGYAVGYLF) and 39 to 59 (GLGGLVIALIIGFIYALSMIF). His143 serves as a coordination point for Zn(2+). Glu144 is a catalytic residue. His147 is a Zn(2+) binding site. The next 2 membrane-spanning stretches (helical) occupy residues 158–178 (IAVALASAITMLSGMAGRMMW) and 198–218 (IIMLVVSLLAIVLAPLAATLV). Glu227 lines the Zn(2+) pocket.

It belongs to the peptidase M48B family. It depends on Zn(2+) as a cofactor.

The protein resides in the cell membrane. The chain is Protease HtpX homolog from Streptococcus pneumoniae (strain P1031).